We begin with the raw amino-acid sequence, 552 residues long: Steroid transmembrane transporter SLC22A24 (552 aa).

12 helical membrane passes run 16 to 36 (FQILQIAFFFVTSMITYTHIL), 144 to 164 (LKSVVQTLFMSGSLLGGLMFG), 175 to 197 (IYTWCLLQTAIADTCAIFAPTFV), 201 to 220 (IFRFLAGLTTINIMTNAFIL), 232 to 252 (IGITLILCSYSIGQMLLGGLA), 255 to 275 (IRDWYTLHLTVSIPLFVLSLL), 349 to 369 (IICFLSFIRLGASVPFMGLIL), 371 to 391 (LQDLGSSIFLFQVLFGAITFI), 407 to 427 (INQSLFFFLVGLCILVNTFLS), 435 to 455 (VVLATLGIGTVSAANATFFVH), 474 to 494 (VFSRMGSVLAPLLMTLVVYSP), and 496 to 516 (LPWVMYGVFPILAGLIVFCLP).

It belongs to the major facilitator (TC 2.A.1) superfamily. Organic cation transporter (TC 2.A.1.19) family.

It is found in the cell membrane. It carries out the reaction estrone 3-sulfate(out) + glutarate(in) = estrone 3-sulfate(in) + glutarate(out). The enzyme catalyses 17beta-estradiol 17-O-(beta-D-glucuronate)(out) + glutarate(in) = 17beta-estradiol 17-O-(beta-D-glucuronate)(in) + glutarate(out). The catalysed reaction is taurocholate(out) + glutarate(in) = taurocholate(in) + glutarate(out). It catalyses the reaction 5alpha-androstane-3alpha,17beta-diol 3-O-(beta-D-glucuronate)(out) + glutarate(in) = 5alpha-androstane-3alpha,17beta-diol 3-O-(beta-D-glucuronate)(in) + glutarate(out). It carries out the reaction glycocholate(out) + glutarate(in) = glycocholate(in) + glutarate(out). The enzyme catalyses dehydroepiandrosterone 3-sulfate(out) + glutarate(in) = dehydroepiandrosterone 3-sulfate(in) + glutarate(out). The catalysed reaction is glutarate(in) + succinate(out) = glutarate(out) + succinate(in). Renal transmembrane organic anion/dicarboxylate exchanger that participates in the reabsorption of conjugated steroids, as well as bile acids, driven by an outward gradient of dicarboxylates such as glutarate or succinate. Transports androstanediol glucuronide (5alpha-androstane-3alpha,17beta-diol 3-O-(beta-D-glucuronate)), estrone 3-sulfate, and estradiol-17-glucuronide (17beta-estradiol 17-O-(beta-D-glucuronate)), and taurocholate. This is Steroid transmembrane transporter SLC22A24 from Oryctolagus cuniculus (Rabbit).